The primary structure comprises 164 residues: ATP synthase subunit b 1 (164 aa).

A helical membrane pass occupies residues 8–28 (PETWVAIAFVILMGLFAYLGV).

It belongs to the ATPase B chain family. As to quaternary structure, F-type ATPases have 2 components, F(1) - the catalytic core - and F(0) - the membrane proton channel. F(1) has five subunits: alpha(3), beta(3), gamma(1), delta(1), epsilon(1). F(0) has three main subunits: a(1), b(2) and c(10-14). The alpha and beta chains form an alternating ring which encloses part of the gamma chain. F(1) is attached to F(0) by a central stalk formed by the gamma and epsilon chains, while a peripheral stalk is formed by the delta and b chains.

The protein localises to the cell inner membrane. In terms of biological role, f(1)F(0) ATP synthase produces ATP from ADP in the presence of a proton or sodium gradient. F-type ATPases consist of two structural domains, F(1) containing the extramembraneous catalytic core and F(0) containing the membrane proton channel, linked together by a central stalk and a peripheral stalk. During catalysis, ATP synthesis in the catalytic domain of F(1) is coupled via a rotary mechanism of the central stalk subunits to proton translocation. Its function is as follows. Component of the F(0) channel, it forms part of the peripheral stalk, linking F(1) to F(0). This chain is ATP synthase subunit b 1, found in Bradyrhizobium sp. (strain ORS 278).